Here is a 189-residue protein sequence, read N- to C-terminus: Ion-translocating oxidoreductase complex subunit B (189 aa).

Residues Met1–Ala26 are hydrophobic. Positions Glu32–Val90 constitute a 4Fe-4S domain. Residues Cys49, Cys52, Cys57, Cys73, Cys114, Cys117, Cys120, Cys124, Cys144, Cys147, Cys150, and Cys154 each contribute to the [4Fe-4S] cluster site. 4Fe-4S ferredoxin-type domains are found at residues Lys105 to Lys134 and Leu135 to Val164.

Belongs to the 4Fe4S bacterial-type ferredoxin family. RnfB subfamily. The complex is composed of six subunits: RnfA, RnfB, RnfC, RnfD, RnfE and RnfG. [4Fe-4S] cluster serves as cofactor.

It is found in the cell inner membrane. Part of a membrane-bound complex that couples electron transfer with translocation of ions across the membrane. This is Ion-translocating oxidoreductase complex subunit B from Shewanella pealeana (strain ATCC 700345 / ANG-SQ1).